The primary structure comprises 289 residues: Ribosomal RNA small subunit methyltransferase I (289 aa).

The protein belongs to the methyltransferase superfamily. RsmI family.

It localises to the cytoplasm. It carries out the reaction cytidine(1402) in 16S rRNA + S-adenosyl-L-methionine = 2'-O-methylcytidine(1402) in 16S rRNA + S-adenosyl-L-homocysteine + H(+). Catalyzes the 2'-O-methylation of the ribose of cytidine 1402 (C1402) in 16S rRNA. This chain is Ribosomal RNA small subunit methyltransferase I, found in Halalkalibacterium halodurans (strain ATCC BAA-125 / DSM 18197 / FERM 7344 / JCM 9153 / C-125) (Bacillus halodurans).